A 1239-amino-acid polypeptide reads, in one-letter code: Zinc finger and BTB domain-containing protein 40 (1239 aa).

Residues 24-87 form the BTB domain; it reads CDCTISIGTI…MYTGKLPVGK (64 aa). Disordered stretches follow at residues 130–231, 687–732, and 779–801; these read SAPS…TSTE, HLEA…PDPA, and KELD…PKKK. The span at 136 to 145 shows a compositional bias: basic and acidic residues; it reads TFRKEPEKPQ. A compositionally biased stretch (polar residues) spans 181–199; it reads SVSQEMSVNSPTAQESQRN. S190 carries the phosphoserine modification. Positions 200–212 are enriched in low complexity; that stretch reads AETPAETPTTAEA. Residues 687 to 703 are compositionally biased toward basic and acidic residues; the sequence is HLEANNKEDEKAAKEDS. The residue at position 703 (S703) is a Phosphoserine. Positions 705-719 are enriched in polar residues; that stretch reads PGEQNDQGETGSLPG. 10 consecutive C2H2-type zinc fingers follow at residues 807–830, 836–858, 864–887, 893–915, 921–944, 950–973, 978–1000, 1006–1029, 1046–1069, and 1075–1098; these read VTCD…LTEH, FSCE…LRLH, FMCK…KKKH, YACQ…VRTH, YVCR…HTFH, YDCK…HEVH, HPCP…VVTH, FSCG…RTHH, LQCS…KAEH, and HECD…KCQH. K1066 is covalently cross-linked (Glycyl lysine isopeptide (Lys-Gly) (interchain with G-Cter in SUMO2)). The segment at 1104–1127 adopts a C2H2-type 11; atypical zinc-finger fold; it reads FRCLYCAATFRFPGALQHHVTTEH. The C2H2-type 12 zinc-finger motif lies at 1135-1158; that stretch reads FPCELCGELFTSQAQLDSHLESEH.

The protein belongs to the krueppel C2H2-type zinc-finger protein family.

It localises to the nucleus. May be involved in transcriptional regulation. The polypeptide is Zinc finger and BTB domain-containing protein 40 (ZBTB40) (Homo sapiens (Human)).